Here is a 367-residue protein sequence, read N- to C-terminus: Molybdopterin synthase catalytic subunit (367 aa).

Residues 101-102 (HR), Lys-117, and 124-126 (KKE) contribute to the substrate site.

It belongs to the MoaE family. MOCS2B subfamily. As to quaternary structure, heterotetramer; composed of 2 small (Mocs2A) and 2 large (Mocs2B) subunits.

The protein localises to the cytoplasm. It carries out the reaction 2 [molybdopterin-synthase sulfur-carrier protein]-C-terminal-Gly-aminoethanethioate + cyclic pyranopterin phosphate + H2O = molybdopterin + 2 [molybdopterin-synthase sulfur-carrier protein]-C-terminal Gly-Gly + 2 H(+). It functions in the pathway cofactor biosynthesis; molybdopterin biosynthesis. Functionally, catalytic subunit of the molybdopterin synthase complex, a complex that catalyzes the conversion of precursor Z into molybdopterin. Acts by mediating the incorporation of 2 sulfur atoms from thiocarboxylated Mocs2A into precursor Z to generate a dithiolene group. In Drosophila erecta (Fruit fly), this protein is Molybdopterin synthase catalytic subunit.